A 369-amino-acid polypeptide reads, in one-letter code: Velvet complex subunit B (369 aa).

Disordered stretches follow at residues 1 to 54, 138 to 174, and 346 to 369; these read MYAV…STVH, SISTAMSSSYPPPPHPTSSDYPASYQTNPYGQPVGQP, and KDGVKGQGSRGRHSDEDDGLDNEY. Pro residues predominate over residues 13–27; that stretch reads HPPPLSMDRIPPPST. Residues 53–345 form the Velvet domain; sequence VHDGRIWSLQ…ANQGIKIPIR (293 aa).

The protein belongs to the velvet family. VelB subfamily. Component of the heterotrimeric velvet complex composed of laeA, veA and velB; VeA acting as a bridging protein between laeA and velB. Interacts directly with veA. Forms a heterodimeric complex with vosA; the formation of the velB-vosA complex is light-dependent.

It is found in the nucleus. Its subcellular location is the cytoplasm. Component of the velvet transcription factor complex that controls sexual/asexual developmental ratio in response to light, promoting sexual development in the darkness while stimulating asexual sporulation under illumination. The velvet complex acts as a global regulator for secondary metabolite gene expression. Component of the velB-VosA heterodimeric complex that plays a dual role in activating genes associated with spore maturation and repressing certain development-associated genes. The velB-VosA complex binds DNA through the DNA-binding domain of vosA that recognizes an 11-nucleotide consensus sequence 5'-CTGGCCGCGGC-3' consisting of two motifs in the promoters of key developmental regulatory genes. The vosA-velB complex binds to the beta-glucan synthase fksA gene promoter in asexual spores for repression. The polypeptide is Velvet complex subunit B (Emericella nidulans (strain FGSC A4 / ATCC 38163 / CBS 112.46 / NRRL 194 / M139) (Aspergillus nidulans)).